Reading from the N-terminus, the 347-residue chain is Holliday junction branch migration complex subunit RuvB (347 aa).

The segment at 1-185 (MSDDPTTPEL…FGFTAHLEFY (185 aa)) is large ATPase domain (RuvB-L). ATP-binding positions include leucine 24, arginine 25, glycine 66, lysine 69, threonine 70, threonine 71, 132-134 (EDF), arginine 175, tyrosine 185, and arginine 222. Threonine 70 provides a ligand contact to Mg(2+). A small ATPAse domain (RuvB-S) region spans residues 186-255 (DEGELAQVLA…AVHAALELYD (70 aa)). A head domain (RuvB-H) region spans residues 258-347 (ELGLDRLDRA…SQPPSLMDDL (90 aa)). Positions 313 and 318 each coordinate DNA.

This sequence belongs to the RuvB family. In terms of assembly, homohexamer. Forms an RuvA(8)-RuvB(12)-Holliday junction (HJ) complex. HJ DNA is sandwiched between 2 RuvA tetramers; dsDNA enters through RuvA and exits via RuvB. An RuvB hexamer assembles on each DNA strand where it exits the tetramer. Each RuvB hexamer is contacted by two RuvA subunits (via domain III) on 2 adjacent RuvB subunits; this complex drives branch migration. In the full resolvosome a probable DNA-RuvA(4)-RuvB(12)-RuvC(2) complex forms which resolves the HJ.

The protein resides in the cytoplasm. It catalyses the reaction ATP + H2O = ADP + phosphate + H(+). Its function is as follows. The RuvA-RuvB-RuvC complex processes Holliday junction (HJ) DNA during genetic recombination and DNA repair, while the RuvA-RuvB complex plays an important role in the rescue of blocked DNA replication forks via replication fork reversal (RFR). RuvA specifically binds to HJ cruciform DNA, conferring on it an open structure. The RuvB hexamer acts as an ATP-dependent pump, pulling dsDNA into and through the RuvAB complex. RuvB forms 2 homohexamers on either side of HJ DNA bound by 1 or 2 RuvA tetramers; 4 subunits per hexamer contact DNA at a time. Coordinated motions by a converter formed by DNA-disengaged RuvB subunits stimulates ATP hydrolysis and nucleotide exchange. Immobilization of the converter enables RuvB to convert the ATP-contained energy into a lever motion, pulling 2 nucleotides of DNA out of the RuvA tetramer per ATP hydrolyzed, thus driving DNA branch migration. The RuvB motors rotate together with the DNA substrate, which together with the progressing nucleotide cycle form the mechanistic basis for DNA recombination by continuous HJ branch migration. Branch migration allows RuvC to scan DNA until it finds its consensus sequence, where it cleaves and resolves cruciform DNA. The polypeptide is Holliday junction branch migration complex subunit RuvB (Leifsonia xyli subsp. xyli (strain CTCB07)).